A 170-amino-acid chain; its full sequence is Bifunctional protein PyrR (170 aa).

The short motif at 90 to 102 is the PRPP-binding element; that stretch reads LVLIDDVLMSGRT.

The protein belongs to the purine/pyrimidine phosphoribosyltransferase family. PyrR subfamily.

The catalysed reaction is UMP + diphosphate = 5-phospho-alpha-D-ribose 1-diphosphate + uracil. In terms of biological role, regulates the transcription of the pyrimidine nucleotide (pyr) operon in response to exogenous pyrimidines. Its function is as follows. Also displays a weak uracil phosphoribosyltransferase activity which is not physiologically significant. The sequence is that of Bifunctional protein PyrR from Pseudomonas savastanoi pv. phaseolicola (strain 1448A / Race 6) (Pseudomonas syringae pv. phaseolicola (strain 1448A / Race 6)).